The primary structure comprises 197 residues: Nucleoid occlusion factor SlmA (197 aa).

The 61-residue stretch at 7–67 (INRREHILQC…GLIEFIEESL (61 aa)) folds into the HTH tetR-type domain. A DNA-binding region (H-T-H motif) is located at residues 30–49 (TTAKLASEVGVSEAALYRHF). Residues 109-136 (DALLGENERLRSRISNLFAKIETQLKQI) adopt a coiled-coil conformation.

This sequence belongs to the nucleoid occlusion factor SlmA family. In terms of assembly, homodimer. Interacts with FtsZ.

It is found in the cytoplasm. Its subcellular location is the nucleoid. Required for nucleoid occlusion (NO) phenomenon, which prevents Z-ring formation and cell division over the nucleoid. Acts as a DNA-associated cell division inhibitor that binds simultaneously chromosomal DNA and FtsZ, and disrupts the assembly of FtsZ polymers. SlmA-DNA-binding sequences (SBS) are dispersed on non-Ter regions of the chromosome, preventing FtsZ polymerization at these regions. This is Nucleoid occlusion factor SlmA from Shewanella baltica (strain OS223).